The primary structure comprises 360 residues: Protein RecA (360 aa).

69–76 (GPESSGKT) serves as a coordination point for ATP.

The protein belongs to the RecA family.

It is found in the cytoplasm. Functionally, can catalyze the hydrolysis of ATP in the presence of single-stranded DNA, the ATP-dependent uptake of single-stranded DNA by duplex DNA, and the ATP-dependent hybridization of homologous single-stranded DNAs. It interacts with LexA causing its activation and leading to its autocatalytic cleavage. The chain is Protein RecA from Trichodesmium erythraeum (strain IMS101).